The sequence spans 256 residues: tRNA (guanine-N(7)-)-methyltransferase (256 aa).

Over residues 1 to 15 (MVATGGQAQDQSHNQ) the composition is skewed to polar residues. A disordered region spans residues 1–22 (MVATGGQAQDQSHNQEPGVLCP). Residues G79, 102-103 (EI), 137-138 (NA), and L157 each bind S-adenosyl-L-methionine. D160 is an active-site residue. 235-237 (SEE) contributes to the S-adenosyl-L-methionine binding site.

Belongs to the class I-like SAM-binding methyltransferase superfamily. TrmB family.

It is found in the nucleus. The catalysed reaction is guanosine(46) in tRNA + S-adenosyl-L-methionine = N(7)-methylguanosine(46) in tRNA + S-adenosyl-L-homocysteine. Its pathway is tRNA modification; N(7)-methylguanine-tRNA biosynthesis. Its function is as follows. Catalyzes the formation of N(7)-methylguanine at position 46 (m7G46) in tRNA. The protein is tRNA (guanine-N(7)-)-methyltransferase of Drosophila yakuba (Fruit fly).